A 314-amino-acid chain; its full sequence is Methionyl-tRNA formyltransferase (314 aa).

Position 110 to 113 (110 to 113 (SLLP)) interacts with (6S)-5,6,7,8-tetrahydrofolate.

The protein belongs to the Fmt family.

It catalyses the reaction L-methionyl-tRNA(fMet) + (6R)-10-formyltetrahydrofolate = N-formyl-L-methionyl-tRNA(fMet) + (6S)-5,6,7,8-tetrahydrofolate + H(+). Its function is as follows. Attaches a formyl group to the free amino group of methionyl-tRNA(fMet). The formyl group appears to play a dual role in the initiator identity of N-formylmethionyl-tRNA by promoting its recognition by IF2 and preventing the misappropriation of this tRNA by the elongation apparatus. This is Methionyl-tRNA formyltransferase from Bacillus cytotoxicus (strain DSM 22905 / CIP 110041 / 391-98 / NVH 391-98).